A 143-amino-acid chain; its full sequence is Mannitol-specific phosphotransferase enzyme IIA component (143 aa).

Residues 1–142 form the PTS EIIA type-2 domain; that stretch reads MKLLKNNIYI…DKVLEFLAKH (142 aa). His61 serves as the catalytic Tele-phosphohistidine intermediate. His61 carries the phosphohistidine; by HPr modification.

The protein localises to the cytoplasm. Functionally, the phosphoenolpyruvate-dependent sugar phosphotransferase system (sugar PTS), a major carbohydrate active transport system, catalyzes the phosphorylation of incoming sugar substrates concomitantly with their translocation across the cell membrane. The enzyme II CmtAB PTS system is involved in D-mannitol transport. The polypeptide is Mannitol-specific phosphotransferase enzyme IIA component (mtlF) (Mycoplasma pneumoniae (strain ATCC 29342 / M129 / Subtype 1) (Mycoplasmoides pneumoniae)).